The following is a 412-amino-acid chain: Argininosuccinate synthase (412 aa).

Residues 10–18 and A36 contribute to the ATP site; that span reads AYSGGLDTS. Residues Y87 and S92 each contribute to the L-citrulline site. Residue Y87 is modified to Phosphotyrosine. At K112 the chain carries N6-acetyllysine. The residue at position 113 (Y113) is a Phosphotyrosine. Position 115–123 (115–123) interacts with ATP; that stretch reads SHGATGKGN. L-aspartate-binding residues include T119, N123, and D124. N123 lines the L-citrulline pocket. R127 contributes to the L-citrulline binding site. N6-acetyllysine; by CLOCK is present on residues K165 and K176. Positions 180 and 189 each coordinate L-citrulline. Phosphoserine is present on S180. S219 carries the phosphoserine modification. E270 and Y282 together coordinate L-citrulline.

The protein belongs to the argininosuccinate synthase family. Type 1 subfamily. In terms of assembly, homotetramer. Interacts with NMRAL1. Interacts with CLOCK; in a circadian manner. Forms tissue-specific complexes with ASL, SLC7A1, HSP90AA1 and nitric oxide synthase NOS1, NOS2 or NOS3; the complex regulates cell-autonomous L-arginine synthesis and citrulline recycling while channeling extracellular L-arginine to nitric oxide synthesis pathway. Acetylated by CLOCK in a circadian manner which negatively regulates its enzyme activity. Deacetylated by histone deacetylases.

It is found in the cytoplasm. The protein resides in the cytosol. It carries out the reaction L-citrulline + L-aspartate + ATP = 2-(N(omega)-L-arginino)succinate + AMP + diphosphate + H(+). It participates in amino-acid biosynthesis; L-arginine biosynthesis; L-arginine from L-ornithine and carbamoyl phosphate: step 2/3. The protein operates within nitrogen metabolism; urea cycle; (N(omega)-L-arginino)succinate from L-aspartate and L-citrulline: step 1/1. One of the enzymes of the urea cycle, the metabolic pathway transforming neurotoxic amonia produced by protein catabolism into inocuous urea in the liver of ureotelic animals. Catalyzes the formation of arginosuccinate from aspartate, citrulline and ATP and together with ASL it is responsible for the biosynthesis of arginine in most body tissues. The chain is Argininosuccinate synthase from Bos taurus (Bovine).